Consider the following 229-residue polypeptide: Potassium/proton antiporter CemA (229 aa).

Transmembrane regions (helical) follow at residues F7–F27, I107–G127, I154–I174, and I189–I209.

It belongs to the CemA family.

It is found in the plastid. It localises to the chloroplast inner membrane. The catalysed reaction is K(+)(in) + H(+)(out) = K(+)(out) + H(+)(in). In terms of biological role, contributes to K(+)/H(+) antiport activity by supporting proton efflux to control proton extrusion and homeostasis in chloroplasts in a light-dependent manner to modulate photosynthesis. Prevents excessive induction of non-photochemical quenching (NPQ) under continuous-light conditions. Indirectly promotes efficient inorganic carbon uptake into chloroplasts. In Ranunculus macranthus (Large buttercup), this protein is Potassium/proton antiporter CemA.